The chain runs to 254 residues: 3-deoxy-manno-octulosonate cytidylyltransferase (254 aa).

Belongs to the KdsB family.

Its subcellular location is the cytoplasm. The catalysed reaction is 3-deoxy-alpha-D-manno-oct-2-ulosonate + CTP = CMP-3-deoxy-beta-D-manno-octulosonate + diphosphate. The protein operates within nucleotide-sugar biosynthesis; CMP-3-deoxy-D-manno-octulosonate biosynthesis; CMP-3-deoxy-D-manno-octulosonate from 3-deoxy-D-manno-octulosonate and CTP: step 1/1. It functions in the pathway bacterial outer membrane biogenesis; lipopolysaccharide biosynthesis. Functionally, activates KDO (a required 8-carbon sugar) for incorporation into bacterial lipopolysaccharide in Gram-negative bacteria. The sequence is that of 3-deoxy-manno-octulosonate cytidylyltransferase from Geobacter metallireducens (strain ATCC 53774 / DSM 7210 / GS-15).